The chain runs to 405 residues: Saccharopepsin (405 aa).

Positions 1-22 (MFSLKALLPLALLLVSANQVAA) are cleaved as a signal peptide. The propeptide at 23–76 (KVHKAKIYKHELSDEMKEVTFEQHLAHLGQKYLTQFEKANPEVVFSREHPFFTE) is activation peptide. Residues 91–402 (YYTDITLGTP…DLGNNAVGLA (312 aa)) form the Peptidase A1 domain. Asp109 is an active-site residue. A disulfide bridge links Cys122 with Cys127. Asn144 carries N-linked (GlcNAc...) asparagine glycosylation. Asp294 is a catalytic residue. A disulfide bond links Cys328 and Cys361. Asn345 carries an N-linked (GlcNAc...) asparagine glycan.

The protein belongs to the peptidase A1 family.

It localises to the vacuole. The catalysed reaction is Hydrolysis of proteins with broad specificity for peptide bonds. Cleaves -Leu-Leu-|-Val-Tyr- bond in a synthetic substrate. Does not act on esters of Tyr or Arg.. Functionally, aspartyl protease implicated in the post-translational regulation of S.cerevisiae vacuolar proteinases. Acts on YSCB, on YSCY and on itself. In Saccharomyces cerevisiae (strain ATCC 204508 / S288c) (Baker's yeast), this protein is Saccharopepsin (PEP4).